Here is a 177-residue protein sequence, read N- to C-terminus: Large ribosomal subunit protein uL6 (177 aa).

It belongs to the universal ribosomal protein uL6 family. As to quaternary structure, part of the 50S ribosomal subunit.

Functionally, this protein binds to the 23S rRNA, and is important in its secondary structure. It is located near the subunit interface in the base of the L7/L12 stalk, and near the tRNA binding site of the peptidyltransferase center. This Actinobacillus pleuropneumoniae serotype 5b (strain L20) protein is Large ribosomal subunit protein uL6.